The chain runs to 665 residues: GRB2-associated-binding protein 2 (665 aa).

Ser2 is modified (phosphoserine). Residues Asp8–Gly119 form the PH domain. The segment at Arg131–Thr184 is disordered. Phosphoserine occurs at positions 135, 142, 143, 149, 150, 160, 165, 211, 220, and 261. The segment covering Ser160–Leu170 has biased composition (polar residues). A Phosphothreonine modification is found at Thr262. A Phosphotyrosine modification is found at Tyr263. Thr275 is modified (phosphothreonine). 2 positions are modified to phosphoserine: Ser278 and Ser282. At Thr284 the chain carries Phosphothreonine. Tyr290 carries the post-translational modification Phosphotyrosine. At Thr328 the chain carries Phosphothreonine. Positions Val338 to Arg396 are disordered. Positions Pro348–Pro355 match the SH3-binding motif. Polar residues predominate over residues Gln357–Val379. Ser365 is modified (phosphoserine). Thr382 and Thr388 each carry phosphothreonine. Position 402 is a phosphoserine (Ser402). Residue Thr405 is modified to Phosphothreonine. The interval Tyr408–Asn445 is disordered. Residue Ser420 is modified to Phosphoserine. Polar residues predominate over residues Gly430–Asp439. The residue at position 441 (Tyr441) is a Phosphotyrosine. Position 469 is a phosphoserine (Ser469). Residues Pro491–Leu517 are disordered. The SH3-binding motif lies at Pro499–Pro508. Ser532 bears the Phosphoserine mark. 2 stretches are compositionally biased toward polar residues: residues Ser548 to Ser566 and Asn578 to Ser600. Disordered regions lie at residues Ser548–Tyr632 and Thr646–Leu665. Ser612 carries the phosphoserine modification. Tyr632 carries the phosphotyrosine modification. The span at Thr646–Pro659 shows a compositional bias: polar residues.

This sequence belongs to the GAB family. Part of a complex composed of EEIG1, TNFRSF11A/RANK, PLCG2, GAB2, TEC and BTK; complex formation increases in the presence of TNFSF11/RANKL. Interacts with HCK. Interacts with SHC1; may mediate interaction with receptors. Interacts with SYK. Interacts with PI-3 kinase. Interacts with GRB2 (via SH3 2 domain). Interacts (phosphorylated) with PTPN11. Interacts with TNFRSF11A (via cytoplasmic domain). Interacts (phosphorylated) with 14-3-3 family proteins SFN, YWHAB, YWHAE, YWHAG, YWHAH, YWHAQ and YWHAZ; prevents interaction with GRB2 and attenuates GAB2 signaling. Post-translationally, phosphorylated upon EGF stimulation. Phosphorylated on tyrosine residues by HCK upon IL6 signaling. Phosphorylated on tyrosine residue(s) by the thrombopoietin receptor (TPOR), stem cell factor receptor (SCFR), and T-cell and B-cell antigen receptors, gp130, IL-2R and IL-3R. Phosphorylated upon stimulation of TNFRSF11A/RANK by TNFSF11/RANKL. In terms of processing, dephosphorylated by PTPN11. Ubiquitously expressed.

It localises to the cytoplasm. The protein localises to the cell membrane. It is found in the membrane raft. Functionally, adapter protein which acts downstream of several membrane receptors including cytokine, antigen, hormone, cell matrix and growth factor receptors to regulate multiple signaling pathways. Regulates osteoclast differentiation mediating the TNFRSF11A/RANK signaling. In allergic response, it plays a role in mast cells activation and degranulation through PI-3-kinase regulation. Also involved in the regulation of cell proliferation and hematopoiesis. The polypeptide is GRB2-associated-binding protein 2 (Gab2) (Mus musculus (Mouse)).